A 610-amino-acid chain; its full sequence is UvrABC system protein C (610 aa).

Residues 16–94 enclose the GIY-YIG domain; that stretch reads SQPGVYRMYD…IKLYQPRYNV (79 aa). In terms of domain architecture, UVR spans 204-239; it reads QQVLNQLISRMESASRDLRFEDAARIRDQIQAVRRV.

It belongs to the UvrC family. Interacts with UvrB in an incision complex.

It is found in the cytoplasm. The UvrABC repair system catalyzes the recognition and processing of DNA lesions. UvrC both incises the 5' and 3' sides of the lesion. The N-terminal half is responsible for the 3' incision and the C-terminal half is responsible for the 5' incision. This chain is UvrABC system protein C, found in Pectobacterium atrosepticum (strain SCRI 1043 / ATCC BAA-672) (Erwinia carotovora subsp. atroseptica).